A 59-amino-acid chain; its full sequence is MAVQKSKVTRSRRGQRRSHDALTGPTLSVDKTTGELHRRHHVSADGFYRGRQVITPKGE.

Residues M1–G34 are disordered. Over residues K7–R16 the composition is skewed to basic residues.

This sequence belongs to the bacterial ribosomal protein bL32 family.

In Marinomonas sp. (strain MWYL1), this protein is Large ribosomal subunit protein bL32.